The sequence spans 278 residues: S-formylglutathione hydrolase YeiG (278 aa).

Residues Ser-145, Asp-223, and His-256 each act as charge relay system in the active site.

The protein belongs to the esterase D family.

It catalyses the reaction S-formylglutathione + H2O = formate + glutathione + H(+). In terms of biological role, serine hydrolase involved in the detoxification of formaldehyde. Hydrolyzes S-formylglutathione to glutathione and formate. The protein is S-formylglutathione hydrolase YeiG (yeiG) of Escherichia coli O157:H7.